A 106-amino-acid polypeptide reads, in one-letter code: UPF0060 membrane protein RL1530 (106 aa).

4 helical membrane passes run 4-24 (IIFAFAALFEIAGCFAFWAWL), 30-50 (VWWLAPGMVSLALFAWILTLV), 58-78 (TFAAYGGIYILASLLWLWLVE), and 86-106 (DIGGALICLAGASLILFAPRG).

The protein belongs to the UPF0060 family.

It localises to the cell inner membrane. This is UPF0060 membrane protein RL1530 from Rhizobium johnstonii (strain DSM 114642 / LMG 32736 / 3841) (Rhizobium leguminosarum bv. viciae).